An 85-amino-acid chain; its full sequence is Probable [Fe-S]-dependent transcriptional repressor (85 aa).

4 residues coordinate iron-sulfur cluster: Cys-56, Cys-61, Cys-64, and Cys-71.

The protein belongs to the FeoC family.

Its function is as follows. May function as a transcriptional regulator that controls feoABC expression. This chain is Probable [Fe-S]-dependent transcriptional repressor, found in Yersinia pseudotuberculosis serotype O:1b (strain IP 31758).